Consider the following 78-residue polypeptide: Acyl carrier protein (78 aa).

The Carrier domain maps to 2–77 (STIEERVKKI…AAIDYVKAHQ (76 aa)). An O-(pantetheine 4'-phosphoryl)serine modification is found at Ser37.

The protein belongs to the acyl carrier protein (ACP) family. 4'-phosphopantetheine is transferred from CoA to a specific serine of apo-ACP by AcpS. This modification is essential for activity because fatty acids are bound in thioester linkage to the sulfhydryl of the prosthetic group.

The protein localises to the cytoplasm. The protein operates within lipid metabolism; fatty acid biosynthesis. Its function is as follows. Carrier of the growing fatty acid chain in fatty acid biosynthesis. The polypeptide is Acyl carrier protein (Pseudomonas putida (strain ATCC 700007 / DSM 6899 / JCM 31910 / BCRC 17059 / LMG 24140 / F1)).